Consider the following 260-residue polypeptide: Hydroxyethylthiazole kinase 1 (260 aa).

Met-39 contributes to the substrate binding site. ATP-binding residues include Arg-115 and Thr-160. Residue Gly-187 coordinates substrate.

The protein belongs to the Thz kinase family. Mg(2+) serves as cofactor.

The enzyme catalyses 5-(2-hydroxyethyl)-4-methylthiazole + ATP = 4-methyl-5-(2-phosphooxyethyl)-thiazole + ADP + H(+). It participates in cofactor biosynthesis; thiamine diphosphate biosynthesis; 4-methyl-5-(2-phosphoethyl)-thiazole from 5-(2-hydroxyethyl)-4-methylthiazole: step 1/1. Functionally, catalyzes the phosphorylation of the hydroxyl group of 4-methyl-5-beta-hydroxyethylthiazole (THZ). In Streptococcus pneumoniae (strain P1031), this protein is Hydroxyethylthiazole kinase 1.